Here is a 268-residue protein sequence, read N- to C-terminus: Small ribosomal subunit protein mS43 (268 aa).

A mitochondrion-targeting transit peptide spans 1–23 (MLNTGLRKGLALSPITHLLKRCS).

It belongs to the mitochondrion-specific ribosomal protein mS43 family. As to quaternary structure, component of the mitochondrial small ribosomal subunit (mt-SSU). Mature yeast 74S mitochondrial ribosomes consist of a small (37S) and a large (54S) subunit. The 37S small subunit contains a 15S ribosomal RNA (15S mt-rRNA) and at least 32 different proteins. The 54S large subunit contains a 21S rRNA (21S mt-rRNA) and at least 45 different proteins. mS43 forms a dimer with mS42, building a large protuberance adjacent to the mRNA channel exit in the mt-SSU body.

Its subcellular location is the mitochondrion. Its function is as follows. Component of the mitochondrial ribosome (mitoribosome), a dedicated translation machinery responsible for the synthesis of mitochondrial genome-encoded proteins, including at least some of the essential transmembrane subunits of the mitochondrial respiratory chain. The mitoribosomes are attached to the mitochondrial inner membrane and translation products are cotranslationally integrated into the membrane. This is Small ribosomal subunit protein mS43 from Schizosaccharomyces pombe (strain 972 / ATCC 24843) (Fission yeast).